We begin with the raw amino-acid sequence, 180 residues long: Interleukin-1-binding protein (180 aa).

The first 20 residues, 1–20 (MSILPVIFLPIFFYSPFVQT), serve as a signal peptide directing secretion. N-linked (GlcNAc...) asparagine; by host glycosylation is found at Asn-80, Asn-103, and Asn-113.

The protein belongs to the interleukin-1 receptor family. In terms of assembly, interacts with mouse Il1b.

It localises to the secreted. May reduce the host inflammatory response by interacting with inteleukin-1 beta (Il1b) and thus decreasing the association between IL1B and its cellular receptor. This is Interleukin-1-binding protein (OPG201) from Monkeypox virus.